The sequence spans 120 residues: Basic phospholipase A2 homolog piratoxin-3 (120 aa).

Cystine bridges form between C26-C113, C28-C44, C43-C94, C49-C120, C50-C87, C57-C81, and C75-C85. The interval 104–115 is important for membrane-damaging activities in eukaryotes and bacteria; heparin-binding; it reads KKYRYHLKPCKK.

Belongs to the phospholipase A2 family. Group II subfamily. D49 sub-subfamily. In terms of assembly, homodimer; non-covalently linked (probable alternative/compact dimer conformation). In terms of tissue distribution, expressed by the venom gland.

The protein localises to the secreted. Functionally, snake venom phospholipase A2 (PLA2) that lacks enzymatic activity. Shows high myotoxin activities. Also has anticoagulant activity. A model of myotoxic mechanism has been proposed: an apo Lys49-PLA2 is activated by the entrance of a hydrophobic molecule (e.g. fatty acid) at the hydrophobic channel of the protein leading to a reorientation of a monomer. This reorientation causes a transition between 'inactive' to 'active' states, causing alignment of C-terminal and membrane-docking sites (MDoS) side-by-side and putting the membrane-disruption sites (MDiS) in the same plane, exposed to solvent and in a symmetric position for both monomers. The MDoS region stabilizes the toxin on membrane by the interaction of charged residues with phospholipid head groups. Subsequently, the MDiS region destabilizes the membrane with penetration of hydrophobic residues. This insertion causes a disorganization of the membrane, allowing an uncontrolled influx of ions (i.e. calcium and sodium), and eventually triggering irreversible intracellular alterations and cell death. This Bothrops pirajai (Piraja's lancehead) protein is Basic phospholipase A2 homolog piratoxin-3.